Consider the following 495-residue polypeptide: tRNA modification GTPase MnmE (495 aa).

Arginine 28, glutamate 89, and lysine 128 together coordinate (6S)-5-formyl-5,6,7,8-tetrahydrofolate. The TrmE-type G domain maps to glycine 223 to histidine 417. Position 233 (asparagine 233) interacts with K(+). Residues asparagine 233–serine 238, serine 252–threonine 258, and aspartate 277–glycine 280 contribute to the GTP site. Serine 237 is a binding site for Mg(2+). Residues serine 252, valine 254, and threonine 257 each coordinate K(+). Position 258 (threonine 258) interacts with Mg(2+). (6S)-5-formyl-5,6,7,8-tetrahydrofolate is bound at residue lysine 495.

The protein belongs to the TRAFAC class TrmE-Era-EngA-EngB-Septin-like GTPase superfamily. TrmE GTPase family. As to quaternary structure, homodimer. Heterotetramer of two MnmE and two MnmG subunits. Requires K(+) as cofactor.

It is found in the cytoplasm. In terms of biological role, exhibits a very high intrinsic GTPase hydrolysis rate. Involved in the addition of a carboxymethylaminomethyl (cmnm) group at the wobble position (U34) of certain tRNAs, forming tRNA-cmnm(5)s(2)U34. The sequence is that of tRNA modification GTPase MnmE from Treponema pallidum (strain Nichols).